The sequence spans 101 residues: Urease subunit beta (101 aa).

Belongs to the urease beta subunit family. Heterotrimer of UreA (gamma), UreB (beta) and UreC (alpha) subunits. Three heterotrimers associate to form the active enzyme.

It is found in the cytoplasm. The enzyme catalyses urea + 2 H2O + H(+) = hydrogencarbonate + 2 NH4(+). The protein operates within nitrogen metabolism; urea degradation; CO(2) and NH(3) from urea (urease route): step 1/1. This chain is Urease subunit beta, found in Ruegeria pomeroyi (strain ATCC 700808 / DSM 15171 / DSS-3) (Silicibacter pomeroyi).